The chain runs to 587 residues: Estrogen receptor (587 aa).

The interval 1–176 (MTLHTKTSGV…SMESTKETRY (176 aa)) is modulating (transactivation AF-1). 2 NR C4-type zinc fingers span residues 177–197 (CAVC…CEGC) and 213–237 (CPAT…LRKC). Residues 177-242 (CAVCNDYASG…RLRKCYEVGM (66 aa)) constitute a DNA-binding region (nuclear receptor). The tract at residues 243-302 (MKGGIRKDRRGGRVMKQKRQREEQDSRNGEASSTELRAPTLWASPLVVKHNKKNSPALSL) is hinge. Residues 248-277 (RKDRRGGRVMKQKRQREEQDSRNGEASSTE) are disordered. Over residues 249-261 (KDRRGGRVMKQKR) the composition is skewed to basic residues. In terms of domain architecture, NR LBD spans 303-539 (TAEQMVSALL…DLLLEMLDAH (237 aa)). Positions 303 to 587 (TAEQMVSALL…KEEENMQNTL (285 aa)) are transactivation AF-2.

The protein belongs to the nuclear hormone receptor family. NR3 subfamily. In terms of assembly, binds DNA as a homodimer. Can form a heterodimer with ER-beta.

The protein resides in the nucleus. Its function is as follows. The steroid hormones and their receptors are involved in the regulation of eukaryotic gene expression and affect cellular proliferation and differentiation in target tissues. In Taeniopygia guttata (Zebra finch), this protein is Estrogen receptor (ESR1).